We begin with the raw amino-acid sequence, 240 residues long: LexA repressor (240 aa).

Positions 26–46 form a DNA-binding region, H-T-H motif; sequence FDEMKEALDLASKSGIHRLIT. Catalysis depends on for autocatalytic cleavage activity residues Ser161 and Lys199.

This sequence belongs to the peptidase S24 family. As to quaternary structure, homodimer.

It carries out the reaction Hydrolysis of Ala-|-Gly bond in repressor LexA.. Its function is as follows. Represses a number of genes involved in the response to DNA damage (SOS response), including recA and lexA. In the presence of single-stranded DNA, RecA interacts with LexA causing an autocatalytic cleavage which disrupts the DNA-binding part of LexA, leading to derepression of the SOS regulon and eventually DNA repair. The chain is LexA repressor from Brucella melitensis biotype 1 (strain ATCC 23456 / CCUG 17765 / NCTC 10094 / 16M).